The primary structure comprises 138 residues: Cofilin (138 aa).

An ADF-H domain is found at 2 to 136; sequence SSGVQPTQEC…TKDALFEKAT (135 aa).

Belongs to the actin-binding proteins ADF family.

Its subcellular location is the cytoplasm. It localises to the cytoskeleton. The protein localises to the nucleus matrix. Controls reversibly actin polymerization and depolymerization in a pH-sensitive manner. It has the ability to bind G- and F-actin in a 1:1 ratio of cofilin to actin. Binding to F-actin is regulated by tropomyosin. It is the major component of intranuclear and cytoplasmic actin rods. Required for accumulation of actin at the cell division site via depolymerizing actin at the cell ends. In association with myosin II has a role in the assembly of the contractile ring via severing actin filaments. Involved in the maintenance of the contractile ring once formed. In association with profilin and capping protein, has a role in the mitotic reorganization of the actin cytoskeleton. The protein is Cofilin (COF1) of Cryptococcus neoformans var. neoformans serotype D (strain B-3501A) (Filobasidiella neoformans).